We begin with the raw amino-acid sequence, 192 residues long: Imidazoleglycerol-phosphate dehydratase (192 aa).

The protein belongs to the imidazoleglycerol-phosphate dehydratase family.

Its subcellular location is the cytoplasm. The enzyme catalyses D-erythro-1-(imidazol-4-yl)glycerol 3-phosphate = 3-(imidazol-4-yl)-2-oxopropyl phosphate + H2O. The protein operates within amino-acid biosynthesis; L-histidine biosynthesis; L-histidine from 5-phospho-alpha-D-ribose 1-diphosphate: step 6/9. The polypeptide is Imidazoleglycerol-phosphate dehydratase (Clostridioides difficile (strain 630) (Peptoclostridium difficile)).